The sequence spans 265 residues: Probable enoyl-CoA hydratase 1, peroxisomal (265 aa).

An N-acetylmethionine modification is found at methionine 1. Substrate is bound by residues 68-72 and alanine 112; that span reads SGVDL. A Microbody targeting signal motif is present at residues 263–265; sequence SKL.

Belongs to the enoyl-CoA hydratase/isomerase family.

The protein resides in the peroxisome. It catalyses the reaction a (3S)-3-hydroxyacyl-CoA = a (2E)-enoyl-CoA + H2O. The enzyme catalyses a 4-saturated-(3S)-3-hydroxyacyl-CoA = a (3E)-enoyl-CoA + H2O. It participates in lipid metabolism; fatty acid beta-oxidation. Straight-chain enoyl-CoA thioesters from C4 up to at least C16 are processed, although with decreasing catalytic rate. The protein is Probable enoyl-CoA hydratase 1, peroxisomal of Arabidopsis thaliana (Mouse-ear cress).